Reading from the N-terminus, the 316-residue chain is Ribosomal RNA small subunit methyltransferase H (316 aa).

Residues 35–37, Asp-55, Phe-84, Asp-105, and Gln-112 each bind S-adenosyl-L-methionine; that span reads AGH.

Belongs to the methyltransferase superfamily. RsmH family.

It localises to the cytoplasm. The enzyme catalyses cytidine(1402) in 16S rRNA + S-adenosyl-L-methionine = N(4)-methylcytidine(1402) in 16S rRNA + S-adenosyl-L-homocysteine + H(+). Specifically methylates the N4 position of cytidine in position 1402 (C1402) of 16S rRNA. This Streptococcus pneumoniae (strain ATCC 700669 / Spain 23F-1) protein is Ribosomal RNA small subunit methyltransferase H.